The chain runs to 136 residues: Protein NrdI (136 aa).

The protein belongs to the NrdI family.

In terms of biological role, probably involved in ribonucleotide reductase function. This chain is Protein NrdI, found in Salmonella arizonae (strain ATCC BAA-731 / CDC346-86 / RSK2980).